The sequence spans 296 residues: Nucleotide-binding protein SSA_0810 (296 aa).

Position 13 to 20 (Gly13 to Thr20) interacts with ATP. Residue Asp63 to Ser66 coordinates GTP. The segment at Trp277–Ser296 is disordered. The span at Ser282–Ser296 shows a compositional bias: basic and acidic residues.

Belongs to the RapZ-like family.

Displays ATPase and GTPase activities. The chain is Nucleotide-binding protein SSA_0810 from Streptococcus sanguinis (strain SK36).